Reading from the N-terminus, the 78-residue chain is Translational regulator CsrA (78 aa).

The protein belongs to the CsrA/RsmA family. In terms of assembly, homodimer; the beta-strands of each monomer intercalate to form a hydrophobic core, while the alpha-helices form wings that extend away from the core.

The protein resides in the cytoplasm. Functionally, a translational regulator that binds mRNA to regulate translation initiation and/or mRNA stability. Usually binds in the 5'-UTR at or near the Shine-Dalgarno sequence preventing ribosome-binding, thus repressing translation. Its main target seems to be the major flagellin gene, while its function is anatagonized by FliW. This Borrelia turicatae (strain 91E135) protein is Translational regulator CsrA.